A 331-amino-acid chain; its full sequence is Glycerophosphodiester phosphodiesterase 1 (331 aa).

Topologically, residues 1 to 3 are cytoplasmic; that stretch reads MWL. Residues 4-24 form a helical membrane-spanning segment; the sequence is WEDQGGLLGPFSFVLVLLLVV. Residues 25 to 248 are Lumenal-facing; sequence TRSPFNACVL…PRYSVFWKQS (224 aa). The region spanning 65–331 is the GP-PDE domain; that stretch reads VSAIAHRGGS…SMLEDCAPHF (267 aa). Mg(2+) is bound by residues glutamate 97 and aspartate 99. An N-linked (GlcNAc...) asparagine glycan is attached at asparagine 168. A Mg(2+)-binding site is contributed by aspartate 174. The chain crosses the membrane as a helical span at residues 249 to 269; it reads VFVVLDILLDWSMHNVLWYLC. The Cytoplasmic segment spans residues 270 to 331; the sequence is GISAFLMQKD…SMLEDCAPHF (62 aa).

This sequence belongs to the glycerophosphoryl diester phosphodiesterase family. In terms of assembly, interacts with PRAF2. Interacts with RGS16. Requires Mg(2+) as cofactor. Post-translationally, N-glycosylated. Widely expressed. Highly expressed in the brain and spinal cord, followed by kidney, liver, and testis. In contrast, little or no expression is detected in the heart or spleen.

It localises to the cell membrane. The protein resides in the cytoplasmic vesicle membrane. It catalyses the reaction sn-glycero-3-phospho-1D-myo-inositol + H2O = myo-inositol + sn-glycerol 3-phosphate + H(+). The catalysed reaction is 1-O-(1Z-octadecenyl)-sn-glycero-3-phospho-(N-5Z,8Z,11Z,14Z-eicosatetraenoyl)-ethanolamine + H2O = 1-O-(1Z-octadecenyl)-sn-glycero-3-phosphate + N-(5Z,8Z,11Z,14Z-eicosatetraenoyl)-ethanolamine + H(+). The enzyme catalyses 1-O-(1Z-octadecenyl)-sn-glycero-3-phospho-(N-9Z-octadecenoyl)-ethanolamine + H2O = 1-O-(1Z-octadecenyl)-sn-glycero-3-phosphate + N-(9Z-octadecenoyl) ethanolamine + H(+). It carries out the reaction 1-O-(1Z-octadecenyl)-sn-glycero-3-phospho-N-hexadecanoyl-ethanolamine + H2O = 1-O-(1Z-octadecenyl)-sn-glycero-3-phosphate + N-hexadecanoylethanolamine + H(+). It catalyses the reaction N-(4Z,7Z,10Z,13Z,16Z,19Z)-docosahexaenoyl-sn-glycero-3-phosphoethanolamine + H2O = N-(4Z,7Z,10Z,13Z,16Z,19Z)-docosahexaenoyl ethanolamine + sn-glycerol 3-phosphate + H(+). The catalysed reaction is N-eicosanoyl-sn-glycero-3-phosphoethanolamine + H2O = N-eicosanoyl ethanolamine + sn-glycerol 3-phosphate + H(+). The enzyme catalyses N-hexadecanoyl-sn-glycero-3-phosphoethanolamine + H2O = N-hexadecanoylethanolamine + sn-glycerol 3-phosphate + H(+). It carries out the reaction N-(9Z-octadecenoyl)-sn-glycero-3-phosphoethanolamine + H2O = N-(9Z-octadecenoyl) ethanolamine + sn-glycerol 3-phosphate + H(+). It catalyses the reaction N-(5Z,8Z,11Z,14Z-eicosatetraenoyl)-sn-glycero-3-phosphoethanolamine + H2O = N-(5Z,8Z,11Z,14Z-eicosatetraenoyl)-ethanolamine + sn-glycerol 3-phosphate + H(+). Its activity is regulated as follows. Inhibited by EDTA, calcium chloride, and zinc chloride. Enhanced by magnesium chloride. Glycerophosphodiester phosphodiesterase activity can be modulated by G-protein signaling pathways. Functionally, hydrolyzes the phosphodiester bond of glycerophosphodiesters such as glycerophosphoinositol (GroPIns) and glycerophosphoethanolamine (GroPEth), to yield a glycerol phosphate and an alcohol. Hydrolyzes glycerophospho-N-acylethanolamines to N-acylethanolamines in the brain and participates in bioactive N-acylethanolamine biosynthesis such as anandamide (an endocannabinoid), N-palmitoylethanolamine (an anti-inflammatory), and N-oleoylethanolamine (an anorexic). In addition, has a lysophospholipase D activity by hydrolyzing N-acyl-lysoplasmenylethanolamine (N-acyl-lysoPlsEt) to N-acylethanolamine. However lysophospholipase D activity is lower than glycerophosphodiester phosphodiesterase activity. Has little or no activity towards glycerophosphocholine. This is Glycerophosphodiester phosphodiesterase 1 from Mus musculus (Mouse).